The sequence spans 86 residues: U18-theraphotoxin-Cg1a (86 aa).

An N-terminal signal peptide occupies residues 1 to 20 (KASVLITLAVLGVMFVWTSA). Positions 21–49 (AELEERGSDQRDSPALIKSMAKVFQSEER) are excised as a propeptide. Cystine bridges form between cysteine 51–cysteine 65, cysteine 58–cysteine 70, and cysteine 64–cysteine 78. Phenylalanine 84 carries the post-translational modification Phenylalanine amide.

Belongs to the neurotoxin 10 (Hwtx-1) family. 47 subfamily. In terms of tissue distribution, expressed by the venom gland.

The protein resides in the secreted. Its function is as follows. Inhibits TTX-sensitive and TTX-insensitive sodium currents (IC(50) is 0.6 uM and 0.95 uM respectively) on rat dorsal root ganglion (DRG) neurons. Inhibits muscular subtypes sodium channels Nav1.4/SCN4A and Nav1.5/SCN5A transiently transfected in to HEK293 cells (IC(50) is 5.42 uM and 0.45 uM respectively). Also blocks Kv2.1/KCNB1 potassium channels expressed in X.laevis oocytes with an IC(50) of 604 nM. Injection of the toxin in mice was immediately followed by general ataxia, lack of response to stimuli and semiparalysis. The chain is U18-theraphotoxin-Cg1a from Chilobrachys guangxiensis (Chinese earth tiger tarantula).